The following is a 244-amino-acid chain: U11/U12 small nuclear ribonucleoprotein 35 kDa protein (244 aa).

An RRM domain is found at 51-129 (LTLFVARLNL…HEIFVDYELE (79 aa)). A compositionally biased stretch (basic and acidic residues) spans 146 to 162 (GKKESGQLRFGGRDRPF). The segment at 146 to 244 (GKKESGQLRF…KSRDKRDRSK (99 aa)) is disordered. Lys-172 is covalently cross-linked (Glycyl lysine isopeptide (Lys-Gly) (interchain with G-Cter in SUMO2)). Composition is skewed to basic and acidic residues over residues 173–185 (NEPH…ERRE) and 192–244 (RHWD…DRSK).

As to quaternary structure, component of the U11/U12 snRNPs that are part of the U12-type spliceosome.

The protein localises to the nucleus. The chain is U11/U12 small nuclear ribonucleoprotein 35 kDa protein (Snrnp35) from Mus musculus (Mouse).